Consider the following 353-residue polypeptide: Sesquiterpene synthase Agr8 (353 aa).

Mg(2+) is bound by residues Asp82, Asn220, Ser224, and Glu228. The short motif at 82 to 86 (DEYTD) is the DDXXD motif element. Residues Arg309 and Tyr310 each coordinate (2E,6E)-farnesyl diphosphate.

It belongs to the terpene synthase family. Mg(2+) is required as a cofactor.

The catalysed reaction is (2E,6E)-farnesyl diphosphate = gamma-muurolene + diphosphate. It catalyses the reaction (2E,6E)-farnesyl diphosphate = alpha-selinene + diphosphate. The enzyme catalyses (2E,6E)-farnesyl diphosphate = delta-cadinene + diphosphate. Terpene cyclase that catalyzes the cyclization of farnesyl diphosphate (FPP) to various sesquiterpenes, including beta-elemene, gamma-muurolene, alpha-selinene, beta-selinene, beta-cadinene, delta-cadinene and alpha-cadinol. The chain is Sesquiterpene synthase Agr8 from Cyclocybe aegerita (Black poplar mushroom).